The sequence spans 321 residues: Probable arabinan endo-1,5-alpha-L-arabinosidase C (321 aa).

The N-terminal stretch at 1-20 (MYLYTLILLFLASVNVNAYA) is a signal peptide. The Proton acceptor role is filled by aspartate 33. 2 N-linked (GlcNAc...) asparagine glycosylation sites follow: asparagine 75 and asparagine 192. Residue glutamate 200 is the Proton donor of the active site. The N-linked (GlcNAc...) asparagine glycan is linked to asparagine 224.

Belongs to the glycosyl hydrolase 43 family.

It localises to the secreted. The enzyme catalyses Endohydrolysis of (1-&gt;5)-alpha-arabinofuranosidic linkages in (1-&gt;5)-arabinans.. It participates in glycan metabolism; L-arabinan degradation. Its function is as follows. Endo-1,5-alpha-L-arabinanase involved in degradation of pectin. Its preferred substrate is linear 1,5-alpha-L-arabinan. In Neosartorya fischeri (strain ATCC 1020 / DSM 3700 / CBS 544.65 / FGSC A1164 / JCM 1740 / NRRL 181 / WB 181) (Aspergillus fischerianus), this protein is Probable arabinan endo-1,5-alpha-L-arabinosidase C (abnC).